The following is a 145-amino-acid chain: Flagellar assembly factor FliW (145 aa).

It belongs to the FliW family. In terms of assembly, interacts with translational regulator CsrA and flagellin(s).

The protein resides in the cytoplasm. Acts as an anti-CsrA protein, binds CsrA and prevents it from repressing translation of its target genes, one of which is flagellin. Binds to flagellin and participates in the assembly of the flagellum. This chain is Flagellar assembly factor FliW, found in Exiguobacterium sp. (strain ATCC BAA-1283 / AT1b).